The sequence spans 252 residues: 3-dehydroquinate dehydratase (252 aa).

3-dehydroquinate is bound by residues Ser21, 46-48, and Arg82; that span reads EWR. His143 acts as the Proton donor/acceptor in catalysis. The Schiff-base intermediate with substrate role is filled by Lys170. Arg213, Ser232, and Gln236 together coordinate 3-dehydroquinate.

It belongs to the type-I 3-dehydroquinase family. Homodimer.

The catalysed reaction is 3-dehydroquinate = 3-dehydroshikimate + H2O. Its pathway is metabolic intermediate biosynthesis; chorismate biosynthesis; chorismate from D-erythrose 4-phosphate and phosphoenolpyruvate: step 3/7. In terms of biological role, involved in the third step of the chorismate pathway, which leads to the biosynthesis of aromatic amino acids. Catalyzes the cis-dehydration of 3-dehydroquinate (DHQ) and introduces the first double bond of the aromatic ring to yield 3-dehydroshikimate. The sequence is that of 3-dehydroquinate dehydratase from Salmonella agona (strain SL483).